Here is a 113-residue protein sequence, read N- to C-terminus: DNA-directed RNA polymerase subunit omega (113 aa).

The protein belongs to the RNA polymerase subunit omega family. In terms of assembly, the RNAP catalytic core consists of 2 alpha, 1 beta, 1 beta' and 1 omega subunit. When a sigma factor is associated with the core the holoenzyme is formed, which can initiate transcription.

The enzyme catalyses RNA(n) + a ribonucleoside 5'-triphosphate = RNA(n+1) + diphosphate. Its function is as follows. Promotes RNA polymerase assembly. Latches the N- and C-terminal regions of the beta' subunit thereby facilitating its interaction with the beta and alpha subunits. This is DNA-directed RNA polymerase subunit omega from Rhizorhabdus wittichii (strain DSM 6014 / CCUG 31198 / JCM 15750 / NBRC 105917 / EY 4224 / RW1) (Sphingomonas wittichii).